The following is a 181-amino-acid chain: Crossover junction endodeoxyribonuclease RuvC (181 aa).

Active-site residues include D7, E67, and D139. Mg(2+) contacts are provided by D7, E67, and D139.

Belongs to the RuvC family. As to quaternary structure, homodimer which binds Holliday junction (HJ) DNA. The HJ becomes 2-fold symmetrical on binding to RuvC with unstacked arms; it has a different conformation from HJ DNA in complex with RuvA. In the full resolvosome a probable DNA-RuvA(4)-RuvB(12)-RuvC(2) complex forms which resolves the HJ. Mg(2+) serves as cofactor.

The protein localises to the cytoplasm. The catalysed reaction is Endonucleolytic cleavage at a junction such as a reciprocal single-stranded crossover between two homologous DNA duplexes (Holliday junction).. Its function is as follows. The RuvA-RuvB-RuvC complex processes Holliday junction (HJ) DNA during genetic recombination and DNA repair. Endonuclease that resolves HJ intermediates. Cleaves cruciform DNA by making single-stranded nicks across the HJ at symmetrical positions within the homologous arms, yielding a 5'-phosphate and a 3'-hydroxyl group; requires a central core of homology in the junction. The consensus cleavage sequence is 5'-(A/T)TT(C/G)-3'. Cleavage occurs on the 3'-side of the TT dinucleotide at the point of strand exchange. HJ branch migration catalyzed by RuvA-RuvB allows RuvC to scan DNA until it finds its consensus sequence, where it cleaves and resolves the cruciform DNA. The chain is Crossover junction endodeoxyribonuclease RuvC from Cupriavidus taiwanensis (strain DSM 17343 / BCRC 17206 / CCUG 44338 / CIP 107171 / LMG 19424 / R1) (Ralstonia taiwanensis (strain LMG 19424)).